We begin with the raw amino-acid sequence, 304 residues long: Choline-phosphate cytidylyltransferase 2 (304 aa).

CTP contacts are provided by residues Ile-28–His-36 and Lys-66. Residues Lys-66 and Trp-95 each coordinate substrate. CTP-binding positions include His-112 to Asp-113, Tyr-117, and Arg-142 to Ile-146. The interval Gln-266 to Val-292 is disordered. Over residues Asn-275–Cys-291 the composition is skewed to acidic residues.

Belongs to the cytidylyltransferase family.

The catalysed reaction is phosphocholine + CTP + H(+) = CDP-choline + diphosphate. It functions in the pathway phospholipid metabolism; phosphatidylcholine biosynthesis; phosphatidylcholine from phosphocholine: step 1/2. Functionally, plays an important role in the biosynthesis of the phospholipid phosphatidylcholine. Catalyzes the formation of CDP-choline. The sequence is that of Choline-phosphate cytidylyltransferase 2 from Arabidopsis thaliana (Mouse-ear cress).